The chain runs to 161 residues: uncharacterized protein (161 aa).

Residues 76–94 (ISISSQCIFNVVILSFVFT) form a helical membrane-spanning segment.

It localises to the membrane. This is an uncharacterized protein from Saccharomyces cerevisiae (strain ATCC 204508 / S288c) (Baker's yeast).